Consider the following 513-residue polypeptide: Na(+)/H(+) antiporter NhaB (513 aa).

11 consecutive transmembrane segments (helical) span residues 21-41 (LCIITFLVINPLIYFFVSPFI), 43-63 (GWTLVAEFIFTLSMALKCYPL), 88-108 (IIANFEVILLLMFMVAGIYFM), 137-157 (AAFLSAFLDALTVIAVIISVG), 202-222 (LLMHAAVGSALGGVMTMVGEP), 235-255 (FIEFLIRVAPVSLPVLICGIA), 299-318 (MAIQALAGIWLIVGLALHLA), 322-344 (IIGLTIIIICTAFCGITDEHAIG), 350-370 (PMPFTALIVVFFTIVAVIVDL), 389-409 (LALFYVFNGLLSMISDNVFVG), and 477-497 (MALPYTIVLSIVGFFALEYLL).

Belongs to the NhaB Na(+)/H(+) (TC 2.A.34) antiporter family.

The protein resides in the cell inner membrane. It carries out the reaction 2 Na(+)(in) + 3 H(+)(out) = 2 Na(+)(out) + 3 H(+)(in). In terms of biological role, na(+)/H(+) antiporter that extrudes sodium in exchange for external protons. The polypeptide is Na(+)/H(+) antiporter NhaB (Haemophilus ducreyi (strain 35000HP / ATCC 700724)).